The sequence spans 120 residues: uncharacterized protein (120 aa).

The protein to M.jannaschii MJ1503.

This is an uncharacterized protein from Methanocaldococcus jannaschii (strain ATCC 43067 / DSM 2661 / JAL-1 / JCM 10045 / NBRC 100440) (Methanococcus jannaschii).